Here is a 182-residue protein sequence, read N- to C-terminus: uncharacterized protein (182 aa).

This is an uncharacterized protein from Acanthamoeba polyphaga mimivirus (APMV).